The chain runs to 371 residues: Photosynthetic reaction center cytochrome c subunit (371 aa).

Positions 114, 127, 130, 131, 153, 167, 178, 181, 182, 267, 278, 281, 282, 339, 342, and 343 each coordinate heme.

As to quaternary structure, component of the photosynthetic reaction center composed of protein subunits L (PufL), M (PufM), H (PuhA) and cytochrome C (PufC). The reaction center interacts with light-harvesting antenna complex LH1. Post-translationally, binds 4 heme groups per subunit.

It localises to the cellular chromatophore membrane. Functionally, the reaction center of purple bacteria contains a tightly bound cytochrome molecule which re-reduces the photo oxidized primary electron donor. This chain is Photosynthetic reaction center cytochrome c subunit (pufC), found in Roseobacter denitrificans (strain ATCC 33942 / OCh 114) (Erythrobacter sp. (strain OCh 114)).